A 428-amino-acid chain; its full sequence is Cell division protein DamX (428 aa).

The segment at Met-1 to Ala-99 is disordered. The Cytoplasmic segment spans residues Met-1–Tyr-103. Basic and acidic residues-rich tracts occupy residues Glu-7–Glu-36 and Asp-50–Glu-64. The stretch at Thr-55 to Arg-87 forms a coiled coil. Acidic residues predominate over residues Pro-65–Glu-82. The span at Arg-86 to Ala-95 shows a compositional bias: basic residues. The chain crosses the membrane as a helical span at residues Met-104 to Leu-124. Residues Lys-125–Lys-428 are Periplasmic-facing. 2 disordered regions span residues Thr-149–Asp-190 and Glu-226–Pro-344. Residues Gly-236–Ala-257 are compositionally biased toward polar residues. Residues Pro-288–Ala-334 show a composition bias toward low complexity. Positions Ser-342–Pro-419 constitute an SPOR domain.

Belongs to the DamX family. In terms of assembly, interacts in vitro with multiple Fts proteins, including FtsQ and FtsN.

It is found in the cell inner membrane. In terms of biological role, non-essential cell division protein. This is Cell division protein DamX from Escherichia coli (strain K12).